Here is a 125-residue protein sequence, read N- to C-terminus: uncharacterized protein (125 aa).

Residues 1–33 show a composition bias toward polar residues; sequence MLPHQNSSYTRQGTNDAQANDMRSPSQLPTSVN. Disordered regions lie at residues 1-35 and 44-63; these read MLPHQNSSYTRQGTNDAQANDMRSPSQLPTSVNIE and SEKLNTPMHNRSRSGIKKHT. Residues 53–63 are compositionally biased toward basic residues; that stretch reads NRSRSGIKKHT.

This is an uncharacterized protein from Schizosaccharomyces pombe (strain 972 / ATCC 24843) (Fission yeast).